Reading from the N-terminus, the 228-residue chain is MTDLPRAVVLLSGGLDSATCLAIARDMGLETYALSVAYGQRHAAELTASRRVAHALGAREHRVASVSLGEFGGSALTDPAIAVPEDAAPGGIPVTYVPARNTVMLSMALAWAEVLGARHIFVGVNAVDYSGYPDCRPAFIQAFETMANLATKAGVEGHPTTIHAPLIDLSKADIIRRGVALGVDYGLTVSCYQADDDGRACGRCDACRLRREGFAAAGIADPTRYQAR.

11-21 (LSGGLDSATCL) is a binding site for ATP. Zn(2+)-binding residues include Cys191, Cys201, Cys204, and Cys207.

Belongs to the QueC family. The cofactor is Zn(2+).

It catalyses the reaction 7-carboxy-7-deazaguanine + NH4(+) + ATP = 7-cyano-7-deazaguanine + ADP + phosphate + H2O + H(+). It functions in the pathway purine metabolism; 7-cyano-7-deazaguanine biosynthesis. Its function is as follows. Catalyzes the ATP-dependent conversion of 7-carboxy-7-deazaguanine (CDG) to 7-cyano-7-deazaguanine (preQ(0)). The chain is 7-cyano-7-deazaguanine synthase from Azoarcus sp. (strain BH72).